The chain runs to 118 residues: Large ribosomal subunit protein bL20 (118 aa).

Belongs to the bacterial ribosomal protein bL20 family.

Functionally, binds directly to 23S ribosomal RNA and is necessary for the in vitro assembly process of the 50S ribosomal subunit. It is not involved in the protein synthesizing functions of that subunit. In Thermosipho melanesiensis (strain DSM 12029 / CIP 104789 / BI429), this protein is Large ribosomal subunit protein bL20.